The following is an 885-amino-acid chain: Alanine--tRNA ligase (885 aa).

Histidine 563, histidine 567, cysteine 677, and histidine 681 together coordinate Zn(2+). The disordered stretch occupies residues 848 to 868 (LGGKGGGGRPDRAQGGAPSLA).

It belongs to the class-II aminoacyl-tRNA synthetase family. Requires Zn(2+) as cofactor.

Its subcellular location is the cytoplasm. It catalyses the reaction tRNA(Ala) + L-alanine + ATP = L-alanyl-tRNA(Ala) + AMP + diphosphate. Catalyzes the attachment of alanine to tRNA(Ala) in a two-step reaction: alanine is first activated by ATP to form Ala-AMP and then transferred to the acceptor end of tRNA(Ala). Also edits incorrectly charged Ser-tRNA(Ala) and Gly-tRNA(Ala) via its editing domain. In Paracoccus denitrificans (strain Pd 1222), this protein is Alanine--tRNA ligase.